Here is a 215-residue protein sequence, read N- to C-terminus: Cytochrome b6 (215 aa).

A helical transmembrane segment spans residues 32–52 (VFYCFGGMTLTCFLVQLATGF). Cys35 is a heme c binding site. His86 and His100 together coordinate heme b. Helical transmembrane passes span 90–110 (ASMM…TGGF), 116–136 (LTWI…VTGY), and 186–206 (LHTL…FLMI). His187 and His202 together coordinate heme b.

The protein belongs to the cytochrome b family. PetB subfamily. As to quaternary structure, the 4 large subunits of the cytochrome b6-f complex are cytochrome b6, subunit IV (17 kDa polypeptide, PetD), cytochrome f and the Rieske protein, while the 4 small subunits are PetG, PetL, PetM and PetN. The complex functions as a dimer. Heme b is required as a cofactor. Heme c serves as cofactor.

The protein resides in the plastid. It localises to the chloroplast thylakoid membrane. Its function is as follows. Component of the cytochrome b6-f complex, which mediates electron transfer between photosystem II (PSII) and photosystem I (PSI), cyclic electron flow around PSI, and state transitions. This chain is Cytochrome b6, found in Cyanidium caldarium (Red alga).